The primary structure comprises 107 residues: MPQQKLHVKSGDTVVVISGKDKGKRGKVLRTFPSEQKVLVEGVNMINKHTRATQENPQGGIVEQEGPVYADKVMVYCSKCQKPVRTGAKIDDKGNKSRICKKCGVEL.

This sequence belongs to the universal ribosomal protein uL24 family. As to quaternary structure, part of the 50S ribosomal subunit.

Functionally, one of two assembly initiator proteins, it binds directly to the 5'-end of the 23S rRNA, where it nucleates assembly of the 50S subunit. One of the proteins that surrounds the polypeptide exit tunnel on the outside of the subunit. In Natranaerobius thermophilus (strain ATCC BAA-1301 / DSM 18059 / JW/NM-WN-LF), this protein is Large ribosomal subunit protein uL24.